A 292-amino-acid polypeptide reads, in one-letter code: 4-hydroxy-tetrahydrodipicolinate synthase (292 aa).

Pyruvate is bound at residue T45. Residue Y133 is the Proton donor/acceptor of the active site. The active-site Schiff-base intermediate with substrate is the K161. Residue I203 participates in pyruvate binding.

This sequence belongs to the DapA family. Homotetramer; dimer of dimers.

It localises to the cytoplasm. The enzyme catalyses L-aspartate 4-semialdehyde + pyruvate = (2S,4S)-4-hydroxy-2,3,4,5-tetrahydrodipicolinate + H2O + H(+). It participates in amino-acid biosynthesis; L-lysine biosynthesis via DAP pathway; (S)-tetrahydrodipicolinate from L-aspartate: step 3/4. In terms of biological role, catalyzes the condensation of (S)-aspartate-beta-semialdehyde [(S)-ASA] and pyruvate to 4-hydroxy-tetrahydrodipicolinate (HTPA). This is 4-hydroxy-tetrahydrodipicolinate synthase from Vibrio vulnificus (strain YJ016).